Consider the following 125-residue polypeptide: Holo-[acyl-carrier-protein] synthase (125 aa).

2 residues coordinate Mg(2+): D8 and E57.

Belongs to the P-Pant transferase superfamily. AcpS family. Mg(2+) is required as a cofactor.

Its subcellular location is the cytoplasm. The catalysed reaction is apo-[ACP] + CoA = holo-[ACP] + adenosine 3',5'-bisphosphate + H(+). Transfers the 4'-phosphopantetheine moiety from coenzyme A to a Ser of acyl-carrier-protein. This Blochmanniella floridana protein is Holo-[acyl-carrier-protein] synthase.